A 542-amino-acid polypeptide reads, in one-letter code: Chaperonin GroEL (542 aa).

ATP-binding positions include 29–32 (TLGP), Lys-50, 86–90 (DGTTT), Gly-415, and Asp-495.

The protein belongs to the chaperonin (HSP60) family. As to quaternary structure, forms a cylinder of 14 subunits composed of two heptameric rings stacked back-to-back. Interacts with the co-chaperonin GroES.

Its subcellular location is the cytoplasm. The enzyme catalyses ATP + H2O + a folded polypeptide = ADP + phosphate + an unfolded polypeptide.. Functionally, together with its co-chaperonin GroES, plays an essential role in assisting protein folding. The GroEL-GroES system forms a nano-cage that allows encapsulation of the non-native substrate proteins and provides a physical environment optimized to promote and accelerate protein folding. The protein is Chaperonin GroEL of Flavobacterium psychrophilum (strain ATCC 49511 / DSM 21280 / CIP 103535 / JIP02/86).